The following is a 223-amino-acid chain: Glutathione-specific gamma-glutamylcyclotransferase 1 (223 aa).

The interval 1-26 is disordered; it reads MKQESASQSTPPPSLSPAPSSAQPSW. 36–41 contributes to the substrate binding site; the sequence is IFGYGS. Glu116 functions as the Proton acceptor in the catalytic mechanism.

It belongs to the gamma-glutamylcyclotransferase family. ChaC subfamily. As to quaternary structure, interacts with NOTCH1 (via extracellular region). Widely expressed, with high expression in forebrain and anterior spinal cord. Expressed at intermediate level in the dorsal aorta and heart. Present throughout adult brain (at protein level).

Its subcellular location is the cytoplasm. It localises to the cytosol. The protein localises to the golgi apparatus. It is found in the trans-Golgi network. The catalysed reaction is glutathione = L-cysteinylglycine + 5-oxo-L-proline. Functionally, catalyzes the cleavage of glutathione into 5-oxo-L-proline and a Cys-Gly dipeptide. Acts specifically on glutathione, but not on other gamma-glutamyl peptides. Glutathione depletion is an important factor for apoptosis initiation and execution. Acts as a pro-apoptotic component of the unfolded protein response pathway by mediating the pro-apoptotic effects of the ATF4-ATF3-DDIT3/CHOP cascade. Negative regulator of Notch signaling pathway involved in embryonic neurogenesis: acts by inhibiting Notch cleavage by furin, maintaining Notch in an immature inactive form, thereby promoting neurogenesis in embryos. The polypeptide is Glutathione-specific gamma-glutamylcyclotransferase 1 (Mus musculus (Mouse)).